The following is a 105-amino-acid chain: Large ribosomal subunit protein uL23 (105 aa).

It belongs to the universal ribosomal protein uL23 family. In terms of assembly, part of the 50S ribosomal subunit. Contacts protein L29, and trigger factor when it is bound to the ribosome.

One of the early assembly proteins it binds 23S rRNA. One of the proteins that surrounds the polypeptide exit tunnel on the outside of the ribosome. Forms the main docking site for trigger factor binding to the ribosome. This Janthinobacterium sp. (strain Marseille) (Minibacterium massiliensis) protein is Large ribosomal subunit protein uL23.